The sequence spans 532 residues: IQ domain-containing protein IQM4 (532 aa).

2 disordered regions span residues 47–67 (SRTNSFKSENPQEKSPKTGME) and 85–104 (PMNKEDEEIVEPTKPARNSL). Basic and acidic residues predominate over residues 56 to 66 (NPQEKSPKTGM). The segment covering 85 to 94 (PMNKEDEEIV) has biased composition (acidic residues). Positions 136-165 (LDAAATTLQKVYKSYRTRRNLADCAVVVEE) constitute an IQ domain. Disordered regions lie at residues 410–443 (SSGYEEEATKEEEAEKKPAETIVTEEQEEEKERE) and 487–513 (PRISPGSTRFPSPYGPIPSPRPSPRVR). Over residues 487-496 (PRISPGSTRF) the composition is skewed to polar residues. The segment covering 499 to 509 (PYGPIPSPRPS) has biased composition (pro residues).

In terms of tissue distribution, expressed in roots, cauline leaves and flowers, and at lower levels in rosette leaves, stems and siliques.

It is found in the cytoplasm. It localises to the nucleus. Its function is as follows. May be involved in biotic and abiotic stress responses. This Arabidopsis thaliana (Mouse-ear cress) protein is IQ domain-containing protein IQM4.